The chain runs to 87 residues: Class II metallothionein-like protein 1A (87 aa).

This sequence belongs to the metallothionein superfamily. Type 15 family. As to expression, expressed in developing seeds.

Functionally, metallothioneins have a high content of cysteine residues that bind various heavy metals. The polypeptide is Class II metallothionein-like protein 1A (MT21A) (Oryza sativa subsp. japonica (Rice)).